Reading from the N-terminus, the 382-residue chain is Innexin-8 (382 aa).

4 helical membrane-spanning segments follow: residues 29–49 (LITA…TYVG), 103–123 (QWSS…KFLW), 187–207 (VIKI…AIFL), and 270–290 (IFLF…IAHF).

The protein belongs to the pannexin family.

It localises to the cell membrane. Its subcellular location is the cell junction. It is found in the gap junction. Its function is as follows. Structural component of the gap junctions. In Caenorhabditis elegans, this protein is Innexin-8 (inx-8).